We begin with the raw amino-acid sequence, 301 residues long: XIAP-associated factor 1 (301 aa).

The TRAF-type zinc-finger motif lies at 22 to 99; it reads LHEAYCLRFL…KLDMQLSKLE (78 aa). A disordered region spans residues 189–257; the sequence is ILPSSLPSQA…KPRTSSPRGD (69 aa). Residues 193–205 show a composition bias toward polar residues; the sequence is SLPSQAAENQTST.

In terms of assembly, interacts with BIRC4; the interaction is not detected in. Interacts with BIRC1, BIRC2, BIRC3, BIRC7 and BIRC8. Part of an complex consisting of BIRC4, XAF1 and BIRC5; the complex formation requires IFN-beta stimulation. Interacts with RNF114, the interaction increases XAF1 stability and proapoptotic effects, and may regulate IFN signaling. Widely expressed. Expression is frequently down-regulated in cancer cell lines. Isoform 5 is widely expressed. Expressed in placenta (at protein level).

It is found in the cytoplasm. Its subcellular location is the nucleus. The protein localises to the mitochondrion. Its function is as follows. Seems to function as a negative regulator of members of the IAP (inhibitor of apoptosis protein) family. Inhibits anti-caspase activity of BIRC4. Induces cleavage and inactivation of BIRC4 independent of caspase activation. Mediates TNF-alpha-induced apoptosis and is involved in apoptosis in trophoblast cells. May inhibit BIRC4 indirectly by activating the mitochondrial apoptosis pathway. After translocation to mitochondria, promotes translocation of BAX to mitochondria and cytochrome c release from mitochondria. Seems to promote the redistribution of BIRC4 from the cytoplasm to the nucleus, probably independent of BIRC4 inactivation which seems to occur in the cytoplasm. The BIRC4-XAF1 complex mediates down-regulation of BIRC5/survivin; the process requires the E3 ligase activity of BIRC4. Seems to be involved in cellular sensitivity to the proapoptotic actions of TRAIL. May be a tumor suppressor by mediating apoptosis resistance of cancer cells. This chain is XIAP-associated factor 1 (XAF1), found in Homo sapiens (Human).